A 207-amino-acid chain; its full sequence is Abscisic acid receptor PYL4 (207 aa).

The interval 45–195 (HEVGPNQCCS…NLQSLAKIAE (151 aa)) is START-like. C52 and C176 are joined by a disulfide. Abscisate is bound by residues K81, 111–116 (AASSTE), 138–144 (RLSNYRS), and E160. The short motif at 107-111 (SGLPA) is the Gate loop element. A Latch loop motif is present at residues 137–139 (HRL).

The protein belongs to the PYR/PYL/RCAR abscisic acid intracellular receptor family. In terms of assembly, monomer. Homodimer. Binds ABA on one subunit only. Interacts with HAB1, ABI1 and ABI2, and possibly with other PP2Cs. Binds to CARs protein in an ABA-independent manner, both at the plasma membrane and in the nucleus. Interacts directly with CAR1 and CAR4. Interacts with TOPP1. Interacts with DDA1. Interacts with FREE1 (via N-terminus). Interacts with the E3 ubiquitin-protein ligase RSL1 at the plasma membrane. Ubiquitynated and degraded by the proteasome upon binding to the E3 ubiquitin-protein ligase RSL1 at the plasma membrane.

It localises to the cytoplasm. It is found in the nucleus. The protein localises to the cell membrane. Its subcellular location is the vacuole. Functionally, receptor for abscisic acid (ABA) required for ABA-mediated responses such as stomatal closure and germination inhibition. Inhibits the activity of group-A protein phosphatases type 2C (PP2Cs) when activated by ABA. Can be activated by both (-)-ABA and (+)-ABA. This Arabidopsis thaliana (Mouse-ear cress) protein is Abscisic acid receptor PYL4.